The primary structure comprises 387 residues: ATP phosphoribosyltransferase regulatory subunit (387 aa).

It belongs to the class-II aminoacyl-tRNA synthetase family. HisZ subfamily. In terms of assembly, heteromultimer composed of HisG and HisZ subunits.

It localises to the cytoplasm. It functions in the pathway amino-acid biosynthesis; L-histidine biosynthesis; L-histidine from 5-phospho-alpha-D-ribose 1-diphosphate: step 1/9. Functionally, required for the first step of histidine biosynthesis. May allow the feedback regulation of ATP phosphoribosyltransferase activity by histidine. The chain is ATP phosphoribosyltransferase regulatory subunit from Polynucleobacter asymbioticus (strain DSM 18221 / CIP 109841 / QLW-P1DMWA-1) (Polynucleobacter necessarius subsp. asymbioticus).